The primary structure comprises 448 residues: tRNA modification GTPase MnmE (448 aa).

The (6S)-5-formyl-5,6,7,8-tetrahydrofolate site is built by R25, E83, and K122. The TrmE-type G domain occupies 218-372 (GFKVAIIGKP…LTQKLQKLLD (155 aa)). Residue N228 coordinates K(+). GTP is bound by residues 228-233 (NTGKSS), 247-253 (SDIAGTT), and 272-275 (DTAG). Position 232 (S232) interacts with Mg(2+). The K(+) site is built by S247, I249, and T252. T253 lines the Mg(2+) pocket. K448 is a binding site for (6S)-5-formyl-5,6,7,8-tetrahydrofolate.

The protein belongs to the TRAFAC class TrmE-Era-EngA-EngB-Septin-like GTPase superfamily. TrmE GTPase family. Homodimer. Heterotetramer of two MnmE and two MnmG subunits. K(+) is required as a cofactor.

The protein resides in the cytoplasm. Exhibits a very high intrinsic GTPase hydrolysis rate. Involved in the addition of a carboxymethylaminomethyl (cmnm) group at the wobble position (U34) of certain tRNAs, forming tRNA-cmnm(5)s(2)U34. The sequence is that of tRNA modification GTPase MnmE from Nitratiruptor sp. (strain SB155-2).